We begin with the raw amino-acid sequence, 144 residues long: Putative 2'-deoxynucleoside 5'-phosphate N-hydrolase 1 (144 aa).

Substrate-binding positions include 7-13 (YFCGSIR), Y22, H39, E83, and 107-109 (SGM).

This sequence belongs to the 2'-deoxynucleoside 5'-phosphate N-hydrolase 1 family. In terms of assembly, monomer and homodimer.

It is found in the cytoplasm. The protein resides in the nucleus. The enzyme catalyses a pyrimidine 2'-deoxyribonucleoside 5'-phosphate + H2O = a pyrimidine nucleobase + 2-deoxy-D-ribose 5-phosphate. The catalysed reaction is a purine 2'-deoxyribonucleoside 5'-phosphate + H2O = a purine nucleobase + 2-deoxy-D-ribose 5-phosphate. Catalyzes the cleavage of the N-glycosidic bond of deoxyribonucleoside 5'-monophosphates to yield deoxyribose 5-phosphate and a purine or pyrimidine base. In Trichoplax adhaerens (Trichoplax reptans), this protein is Putative 2'-deoxynucleoside 5'-phosphate N-hydrolase 1.